The primary structure comprises 553 residues: Serine/threonine-protein phosphatase 2B catalytic subunit A1 (553 aa).

N-acetylserine is present on serine 2. Fe cation is bound by residues aspartate 119, histidine 121, and aspartate 147. Zn(2+) is bound by residues aspartate 147 and asparagine 179. Histidine 180 functions as the Proton donor in the catalytic mechanism. Residues histidine 228 and histidine 317 each contribute to the Zn(2+) site. Positions leucine 413 to alanine 447 are disordered. The segment covering serine 417–lysine 427 has biased composition (basic and acidic residues).

This sequence belongs to the PPP phosphatase family. PP-2B subfamily. Composed of two components (A and B), the A component is the catalytic subunit and the B component confers calcium sensitivity. Fe(3+) serves as cofactor. The cofactor is Zn(2+).

It catalyses the reaction O-phospho-L-seryl-[protein] + H2O = L-seryl-[protein] + phosphate. The catalysed reaction is O-phospho-L-threonyl-[protein] + H2O = L-threonyl-[protein] + phosphate. Calcium-dependent, calmodulin-stimulated protein phosphatase. This subunit may have a role in the calmodulin activation of calcineurin. In Saccharomyces cerevisiae (strain ATCC 204508 / S288c) (Baker's yeast), this protein is Serine/threonine-protein phosphatase 2B catalytic subunit A1 (CNA1).